Here is a 332-residue protein sequence, read N- to C-terminus: Beta-ketoacyl-[acyl-carrier-protein] synthase III (332 aa).

Catalysis depends on residues cysteine 116 and histidine 255. The ACP-binding stretch occupies residues 256 to 260 (QANLR). Asparagine 285 is an active-site residue.

It belongs to the thiolase-like superfamily. FabH family. In terms of assembly, homodimer.

The protein localises to the cytoplasm. The catalysed reaction is malonyl-[ACP] + acetyl-CoA + H(+) = 3-oxobutanoyl-[ACP] + CO2 + CoA. It participates in lipid metabolism; fatty acid biosynthesis. Functionally, catalyzes the condensation reaction of fatty acid synthesis by the addition to an acyl acceptor of two carbons from malonyl-ACP. Catalyzes the first condensation reaction which initiates fatty acid synthesis and may therefore play a role in governing the total rate of fatty acid production. Possesses both acetoacetyl-ACP synthase and acetyl transacylase activities. Its substrate specificity determines the biosynthesis of branched-chain and/or straight-chain of fatty acids. This is Beta-ketoacyl-[acyl-carrier-protein] synthase III from Helicobacter hepaticus (strain ATCC 51449 / 3B1).